The primary structure comprises 364 residues: Dual-specificity RNA methyltransferase RlmN (364 aa).

The active-site Proton acceptor is the glutamate 91. The region spanning 97–333 (ESDRGTLCIS…VTVRKTRGDD (237 aa)) is the Radical SAM core domain. An intrachain disulfide couples cysteine 104 to cysteine 338. Residues cysteine 111, cysteine 115, and cysteine 118 each contribute to the [4Fe-4S] cluster site. Residues 164-165 (GE), serine 196, 218-220 (SLH), and asparagine 295 each bind S-adenosyl-L-methionine. The S-methylcysteine intermediate role is filled by cysteine 338.

Belongs to the radical SAM superfamily. RlmN family. Requires [4Fe-4S] cluster as cofactor.

The protein localises to the cytoplasm. It carries out the reaction adenosine(2503) in 23S rRNA + 2 reduced [2Fe-2S]-[ferredoxin] + 2 S-adenosyl-L-methionine = 2-methyladenosine(2503) in 23S rRNA + 5'-deoxyadenosine + L-methionine + 2 oxidized [2Fe-2S]-[ferredoxin] + S-adenosyl-L-homocysteine. The catalysed reaction is adenosine(37) in tRNA + 2 reduced [2Fe-2S]-[ferredoxin] + 2 S-adenosyl-L-methionine = 2-methyladenosine(37) in tRNA + 5'-deoxyadenosine + L-methionine + 2 oxidized [2Fe-2S]-[ferredoxin] + S-adenosyl-L-homocysteine. Functionally, specifically methylates position 2 of adenine 2503 in 23S rRNA and position 2 of adenine 37 in tRNAs. m2A2503 modification seems to play a crucial role in the proofreading step occurring at the peptidyl transferase center and thus would serve to optimize ribosomal fidelity. This Neisseria meningitidis serogroup C (strain 053442) protein is Dual-specificity RNA methyltransferase RlmN.